The chain runs to 314 residues: MISICCSRFSCILFLLFLIFSLVLSYIWWSPTKGGTNPEVLPVVLWHGMGDTCCVPFSLGAIMNLIVEQTKGGYVRSLQIGGNVLIDWQSGFFIHPNEQVDYVCKQLLQDEHLAKGYHAIGFSQGGQFLRAVAERCPNPPMRNLITLGGQHQGIFGLPMCPTLTEKPCDYITRLLDNAAYAPEVQKALVQATYWHDPIMENKYRLGSTFLADINNELFINKFYIENLQKLKKFVMVQFLNDTIVQPKESQWFQYYTTGQNKVIQPFTESKVYQDLGLDKMHRQGQLVFLGVEGDHLAISKAWFIQNIVPLLLEK.

The first 25 residues, 1-25 (MISICCSRFSCILFLLFLIFSLVLS), serve as a signal peptide directing secretion. 3 disulfides stabilise this stretch: Cys-53/Cys-54, Cys-104/Cys-136, and Cys-160/Cys-168. Ser-123 serves as the catalytic Nucleophile. Asn-240 is a glycosylation site (N-linked (GlcNAc...) asparagine). Catalysis depends on residues Asp-241 and His-295.

Belongs to the palmitoyl-protein thioesterase family. Ubiquitously expressed.

The protein resides in the lysosome. It carries out the reaction S-hexadecanoyl-L-cysteinyl-[protein] + H2O = L-cysteinyl-[protein] + hexadecanoate + H(+). In terms of biological role, cleaves thioester-linked long fatty acyl groups such as palmitate from modified cysteine residues in proteins or peptides. This chain is Palmitoyl-protein thioesterase 1 (Ppt1), found in Drosophila melanogaster (Fruit fly).